The following is a 95-amino-acid chain: CRISPR-associated endoribonuclease Cas2 3 (95 aa).

Mg(2+) is bound at residue Asp-7.

The protein belongs to the CRISPR-associated endoribonuclease Cas2 protein family. In terms of assembly, homodimer, forms a heterotetramer with a Cas1 homodimer. Mg(2+) is required as a cofactor.

CRISPR (clustered regularly interspaced short palindromic repeat), is an adaptive immune system that provides protection against mobile genetic elements (viruses, transposable elements and conjugative plasmids). CRISPR clusters contain sequences complementary to antecedent mobile elements and target invading nucleic acids. CRISPR clusters are transcribed and processed into CRISPR RNA (crRNA). Functions as a ssRNA-specific endoribonuclease. Involved in the integration of spacer DNA into the CRISPR cassette. This Rhodospirillum rubrum (strain ATCC 11170 / ATH 1.1.1 / DSM 467 / LMG 4362 / NCIMB 8255 / S1) protein is CRISPR-associated endoribonuclease Cas2 3.